We begin with the raw amino-acid sequence, 131 residues long: Small ribosomal subunit protein uS8 (131 aa).

The protein belongs to the universal ribosomal protein uS8 family. As to quaternary structure, part of the 30S ribosomal subunit. Contacts proteins S5 and S12.

Its function is as follows. One of the primary rRNA binding proteins, it binds directly to 16S rRNA central domain where it helps coordinate assembly of the platform of the 30S subunit. This chain is Small ribosomal subunit protein uS8, found in Cupriavidus necator (strain ATCC 17699 / DSM 428 / KCTC 22496 / NCIMB 10442 / H16 / Stanier 337) (Ralstonia eutropha).